The primary structure comprises 381 residues: Cytosolic acyl coenzyme A thioester hydrolase (381 aa).

In terms of domain architecture, HotDog ACOT-type 1 spans 51–169 (PGHCIAMGRI…TLWYVPLSLK (119 aa)). The active site involves asparagine 67. N6-acetyllysine is present on residues lysine 169 and lysine 199. The region spanning 225-339 (SYSQSSLIHL…FFTYVSLNQE (115 aa)) is the HotDog ACOT-type 2 domain. Residue aspartate 256 is part of the active site. Lysine 284 carries the post-translational modification N6-acetyllysine. Positions 343–381 (LPVPQLVPETEDEKKRFEEGKGRYLQMKAKRQGHTEPQP) are disordered. Residues 354–364 (DEKKRFEEGKG) are compositionally biased toward basic and acidic residues.

As to quaternary structure, homohexamer. Post-translationally, the N-terminus is blocked. In terms of tissue distribution, isoform 1 is expressed constitutively in brain and testis. Isoform 2 is induced in liver by treatment with the peroxisome proliferator.

Its subcellular location is the cytoplasm. The protein localises to the cytosol. It catalyses the reaction hexadecanoyl-CoA + H2O = hexadecanoate + CoA + H(+). It carries out the reaction dodecanoyl-CoA + H2O = dodecanoate + CoA + H(+). The enzyme catalyses tetradecanoyl-CoA + H2O = tetradecanoate + CoA + H(+). The catalysed reaction is decanoyl-CoA + H2O = decanoate + CoA + H(+). It catalyses the reaction octanoyl-CoA + H2O = octanoate + CoA + H(+). It carries out the reaction octadecanoyl-CoA + H2O = octadecanoate + CoA + H(+). The enzyme catalyses (9Z)-octadecenoyl-CoA + H2O = (9Z)-octadecenoate + CoA + H(+). It participates in lipid metabolism; fatty acid metabolism. In terms of biological role, catalyzes the hydrolysis of acyl-CoAs into free fatty acids and coenzyme A (CoASH), regulating their respective intracellular levels. Preferentially hydrolyzes palmitoyl-CoA, but has a broad specificity acting on other fatty acyl-CoAs with chain-lengths of C8-C18. May play an important physiological function in brain. The chain is Cytosolic acyl coenzyme A thioester hydrolase (Acot7) from Rattus norvegicus (Rat).